Here is a 375-residue protein sequence, read N- to C-terminus: D-apiose dehydrogenase (375 aa).

29-30 is a binding site for NAD(+); the sequence is FF. Mg(2+) is bound by residues Trp-38, Arg-39, Ile-41, and Ala-44. NAD(+) contacts are provided by residues Asp-51, Ser-93, 111 to 112, Asn-140, and 179 to 181; these read QK and QPY. Position 112 (Lys-112) interacts with substrate. Gln-179, Asp-192, His-196, and Tyr-246 together coordinate substrate.

It belongs to the Gfo/Idh/MocA family.

The enzyme catalyses D-apiofuranose + NAD(+) = D-apionolactone + NADH + H(+). Its pathway is carbohydrate metabolism. Functionally, involved in catabolism of D-apiose. Catalyzes oxidation of D-apiose to D-apionolactone. The sequence is that of D-apiose dehydrogenase from Paraburkholderia graminis (strain ATCC 700544 / DSM 17151 / LMG 18924 / NCIMB 13744 / C4D1M).